Consider the following 281-residue polypeptide: ATP phosphoribosyltransferase (281 aa).

Belongs to the ATP phosphoribosyltransferase family. Long subfamily. Mg(2+) serves as cofactor.

It is found in the cytoplasm. It catalyses the reaction 1-(5-phospho-beta-D-ribosyl)-ATP + diphosphate = 5-phospho-alpha-D-ribose 1-diphosphate + ATP. It participates in amino-acid biosynthesis; L-histidine biosynthesis; L-histidine from 5-phospho-alpha-D-ribose 1-diphosphate: step 1/9. Its activity is regulated as follows. Feedback inhibited by histidine. Catalyzes the condensation of ATP and 5-phosphoribose 1-diphosphate to form N'-(5'-phosphoribosyl)-ATP (PR-ATP). Has a crucial role in the pathway because the rate of histidine biosynthesis seems to be controlled primarily by regulation of HisG enzymatic activity. The protein is ATP phosphoribosyltransferase of Natronomonas pharaonis (strain ATCC 35678 / DSM 2160 / CIP 103997 / JCM 8858 / NBRC 14720 / NCIMB 2260 / Gabara) (Halobacterium pharaonis).